A 277-amino-acid polypeptide reads, in one-letter code: MAVVTMKQLLDSGAHFGHQTRRWNPKMKRFIFTDRNGIYIIDLQQTLTYIDKAYEFVKETVAHGGSVMFVGTKKQAQEPIAEEATRVGMPYVNQRWLGGMLTNFSTVHKRLQRLKELESMEQTGGFEGRTKKEILMLTREKNKLERSLGGIRDMQKVPSAIFVVDTNKEHLAVAEARKLNIPIIAILDTNCDPDVVDYPIPGNDDAIRSAALLTKVVASAIAEGLQARSGLAGGDEKPEAGEPLAEWEQELLASAVATTDEASAPSAAATETTTEEG.

The tract at residues 255–277 (AVATTDEASAPSAAATETTTEEG) is disordered. Residues 257-277 (ATTDEASAPSAAATETTTEEG) show a composition bias toward low complexity.

Belongs to the universal ribosomal protein uS2 family.

The polypeptide is Small ribosomal subunit protein uS2 (Mycobacteroides abscessus (strain ATCC 19977 / DSM 44196 / CCUG 20993 / CIP 104536 / JCM 13569 / NCTC 13031 / TMC 1543 / L948) (Mycobacterium abscessus)).